The chain runs to 645 residues: DNA ligase (645 aa).

NAD(+) contacts are provided by residues 30–34, 79–80, and E106; these read DDEYD and SM. Residue K108 is the N6-AMP-lysine intermediate of the active site. Residues R129, E163, and K302 each coordinate NAD(+). Residues C396, C399, C412, and C417 each contribute to the Zn(2+) site. Residues 570–645 enclose the BRCT domain; sequence LKTNIFSGKT…IDESEYESLK (76 aa).

The protein belongs to the NAD-dependent DNA ligase family. LigA subfamily. The cofactor is Mg(2+). Mn(2+) is required as a cofactor.

The catalysed reaction is NAD(+) + (deoxyribonucleotide)n-3'-hydroxyl + 5'-phospho-(deoxyribonucleotide)m = (deoxyribonucleotide)n+m + AMP + beta-nicotinamide D-nucleotide.. In terms of biological role, DNA ligase that catalyzes the formation of phosphodiester linkages between 5'-phosphoryl and 3'-hydroxyl groups in double-stranded DNA using NAD as a coenzyme and as the energy source for the reaction. It is essential for DNA replication and repair of damaged DNA. This Campylobacter fetus subsp. fetus (strain 82-40) protein is DNA ligase.